Reading from the N-terminus, the 161-residue chain is Nucleotide-binding protein LHK_01423 (161 aa).

The protein belongs to the YajQ family.

Nucleotide-binding protein. The sequence is that of Nucleotide-binding protein LHK_01423 from Laribacter hongkongensis (strain HLHK9).